The following is a 61-amino-acid chain: Calprismin (61 aa).

Glycosylated. In terms of tissue distribution, expressed by the calcifying mantle epithelium and incorporated into the shell's calcitic prismatic layer.

This Pinna nobilis (Noble pen shell) protein is Calprismin.